We begin with the raw amino-acid sequence, 762 residues long: Multifunctional tryptophan biosynthesis protein (762 aa).

Residues 25–224 (NLILIDNYDS…LHMQGGTWAE (200 aa)) enclose the Glutamine amidotransferase type-1 domain. 76–78 (GPG) lines the L-glutamine pocket. The active-site Nucleophile; for GATase activity is cysteine 104. Residues glutamine 108 and 154-155 (SL) contribute to the L-glutamine site. Catalysis depends on for GATase activity residues histidine 198 and glutamate 200. The segment at 251–515 (ILQKIYAHRK…DATQFIRELC (265 aa)) is indole-3-glycerol phosphate synthase. The tract at residues 531-762 (LVKICGTRSA…EFVKAAKSVR (232 aa)) is N-(5'-phosphoribosyl)anthranilate isomerase.

In terms of assembly, tetramer of two components I and two components II.

The catalysed reaction is chorismate + L-glutamine = anthranilate + pyruvate + L-glutamate + H(+). It carries out the reaction N-(5-phospho-beta-D-ribosyl)anthranilate = 1-(2-carboxyphenylamino)-1-deoxy-D-ribulose 5-phosphate. It catalyses the reaction 1-(2-carboxyphenylamino)-1-deoxy-D-ribulose 5-phosphate + H(+) = (1S,2R)-1-C-(indol-3-yl)glycerol 3-phosphate + CO2 + H2O. Its pathway is amino-acid biosynthesis; L-tryptophan biosynthesis; L-tryptophan from chorismate: step 1/5. It functions in the pathway amino-acid biosynthesis; L-tryptophan biosynthesis; L-tryptophan from chorismate: step 3/5. It participates in amino-acid biosynthesis; L-tryptophan biosynthesis; L-tryptophan from chorismate: step 4/5. Its function is as follows. Trifunctional enzyme bearing the Gln amidotransferase (GATase) domain of anthranilate synthase, indole-glycerolphosphate synthase, and phosphoribosylanthranilate isomerase activities. The chain is Multifunctional tryptophan biosynthesis protein (trp-1) from Neurospora crassa (strain ATCC 24698 / 74-OR23-1A / CBS 708.71 / DSM 1257 / FGSC 987).